A 529-amino-acid chain; its full sequence is Peptide chain release factor 3 (529 aa).

Positions 11–280 (SKRRTFAIIS…GLVAWAPAPM (270 aa)) constitute a tr-type G domain. GTP contacts are provided by residues 20–27 (SHPDAGKT), 88–92 (DTPGH), and 142–145 (NKLD).

It belongs to the TRAFAC class translation factor GTPase superfamily. Classic translation factor GTPase family. PrfC subfamily.

Its subcellular location is the cytoplasm. Functionally, increases the formation of ribosomal termination complexes and stimulates activities of RF-1 and RF-2. It binds guanine nucleotides and has strong preference for UGA stop codons. It may interact directly with the ribosome. The stimulation of RF-1 and RF-2 is significantly reduced by GTP and GDP, but not by GMP. This is Peptide chain release factor 3 from Pectobacterium carotovorum subsp. carotovorum (strain PC1).